Reading from the N-terminus, the 440-residue chain is Probable secretory pathway GDP dissociation inhibitor 1 (440 aa).

It belongs to the Rab GDI family.

This is Probable secretory pathway GDP dissociation inhibitor 1 (gdi1) from Schizosaccharomyces pombe (strain 972 / ATCC 24843) (Fission yeast).